The chain runs to 463 residues: Chromosomal replication initiator protein DnaA (463 aa).

The tract at residues 1–83 is domain I, interacts with DnaA modulators; that stretch reads MSTNQIILTD…LQLFQHYNNT (83 aa). Positions 83–124 are domain II; that stretch reads TIKSVEIITKELPGTSKTVIELPTKTFADIGSSELNAENIFS. Residues 125–343 are domain III, AAA+ region; that stretch reads TLDVRFTFDN…GALNKVIAHS (219 aa). ATP contacts are provided by G171, G173, K174, and T175. The interval 344–463 is domain IV, binds dsDNA; sequence NFTLKEITLE…INLLMKILQN (120 aa).

It belongs to the DnaA family. Oligomerizes as a right-handed, spiral filament on DNA at oriC.

Its subcellular location is the cytoplasm. In terms of biological role, plays an essential role in the initiation and regulation of chromosomal replication. ATP-DnaA binds to the origin of replication (oriC) to initiate formation of the DNA replication initiation complex once per cell cycle. Binds the DnaA box (a 9 base pair repeat at the origin) and separates the double-stranded (ds)DNA. Forms a right-handed helical filament on oriC DNA; dsDNA binds to the exterior of the filament while single-stranded (ss)DNA is stabiized in the filament's interior. The ATP-DnaA-oriC complex binds and stabilizes one strand of the AT-rich DNA unwinding element (DUE), permitting loading of DNA polymerase. After initiation quickly degrades to an ADP-DnaA complex that is not apt for DNA replication. Binds acidic phospholipids. The protein is Chromosomal replication initiator protein DnaA of Rickettsia canadensis (strain McKiel).